A 275-amino-acid polypeptide reads, in one-letter code: Ribosomal RNA small subunit methyltransferase A (275 aa).

S-adenosyl-L-methionine is bound by residues Asn-28, Leu-30, Gly-55, Glu-77, Asp-103, and Asn-123.

This sequence belongs to the class I-like SAM-binding methyltransferase superfamily. rRNA adenine N(6)-methyltransferase family. RsmA subfamily.

It localises to the cytoplasm. The enzyme catalyses adenosine(1518)/adenosine(1519) in 16S rRNA + 4 S-adenosyl-L-methionine = N(6)-dimethyladenosine(1518)/N(6)-dimethyladenosine(1519) in 16S rRNA + 4 S-adenosyl-L-homocysteine + 4 H(+). Functionally, specifically dimethylates two adjacent adenosines (A1518 and A1519) in the loop of a conserved hairpin near the 3'-end of 16S rRNA in the 30S particle. May play a critical role in biogenesis of 30S subunits. This is Ribosomal RNA small subunit methyltransferase A from Rhizobium johnstonii (strain DSM 114642 / LMG 32736 / 3841) (Rhizobium leguminosarum bv. viciae).